The chain runs to 504 residues: Transcriptional coactivator YAP1 (504 aa).

Composition is skewed to pro residues over residues 1-12 (MDPGQQPPPQPA) and 20-36 (PSQPPQGQGPPSGPGQP). A disordered region spans residues 1–59 (MDPGQQPPPQPAPQGQGQPPSQPPQGQGPPSGPGQPAPAATQAAPQAPPAGHQIVHVRG). The segment covering 37-51 (APAATQAAPQAPPAG) has biased composition (low complexity). Serine 61 is subject to Phosphoserine; by LATS1 and LATS2. Phosphothreonine is present on threonine 63. Residues 86–100 (MRLRKLPDSFFKPPE) adopt a coiled-coil conformation. Lysine 90 is modified (N6-lactoyllysine). The segment at 91-114 (LPDSFFKPPEPKSHSRQASTDAGT) is disordered. Serine 105 carries the post-translational modification Phosphoserine. Serine 109 carries the phosphoserine; by LATS1 and LATS2 modification. The residue at position 110 (threonine 110) is a Phosphothreonine. Threonine 119 bears the Phosphothreonine; by MAPK8 and MAPK9 mark. Residue serine 127 is modified to Phosphoserine; by LATS1 and LATS2. 2 positions are modified to phosphoserine: serine 128 and serine 131. The segment at 133 to 158 (QLGAVSPGTLTPTGVVSGPAATPTAQ) is disordered. Residue serine 138 is modified to Phosphoserine; by MAPK8 and MAPK9. Threonine 154 bears the Phosphothreonine; by MAPK8 and MAPK9 mark. Position 164 is a phosphoserine; by LATS1 and LATS2 (serine 164). WW domains are found at residues 171 to 204 (VPLPAGWEMAKTSSGQRYFLNHIDQTTTWQDPRK) and 230 to 263 (GPLPDGWEQAMTQDGEIYYINHKNKTTSWLDPRL). Phosphoserine occurs at positions 274 and 289. Disordered stretches follow at residues 275 to 309 (QSAPVKQPPPLAPQSPQGGVMGGSNSNQQQQMRLQ) and 355 to 407 (LEQD…MSSY). The interval 291-504 (QGGVMGGSNS…LDKESFLTWL (214 aa)) is transactivation domain. A coiled-coil region spans residues 298-359 (SNSNQQQQMR…SQLPTLEQDG (62 aa)). Positions 355-391 (LEQDGGTQNPVSSPGMSQELRTMTTNSSDPFLNSGTY) are enriched in polar residues. Serine 367 is modified (phosphoserine; by MAPK8 and MAPK9). 4 positions are modified to phosphoserine: serine 371, serine 381, serine 382, and serine 388. At serine 397 the chain carries Phosphoserine; by LATS1 and LATS2. Phosphoserine; by CK1 occurs at positions 400 and 403. Position 407 is a phosphotyrosine; by ABL1 (tyrosine 407). Position 412 is a phosphothreonine; by MAPK8 and MAPK9 (threonine 412).

This sequence belongs to the YAP1 family. As to quaternary structure, part of a complex when phosphorylated that contains DSG3, PKP1, YAP1 and YWHAG; the complex is required for localization of DSG3 and YAP1 to the cell membrane in keratinocytes. Binds to the SH3 domain of the YES kinase. Binds to WBP1 and WBP2. Binds, in vitro, through the WW1 domain, to neural isoforms of ENAH that contain the PPSY motif. The phosphorylated form interacts with YWHAB. Interacts (via WW domains) with LATS1 (via PPxY motif 2). Interacts with LATS2. Interacts with TEAD1, TEAD2, TEAD3 and TEAD4. Interacts with TP73. Interacts with RUNX1. Interacts with HCK. Interacts (via WW domains) with PTPN14 (via PPxY motif 2); this interaction leads to the cytoplasmic sequestration of YAP1 and inhibits its transcriptional coactivator activity. Interacts (when phosphorylated at Ser-127) with SMAD2, SMAD3 and WWTR1. Interacts with PRRG2 (via cytoplasmic domain). Interacts (via WW domains) with PRRG4 (via cytoplasmic domain). Interacts (phosphorylated) with CLDN18; the interaction sequesters YAP1 away from the nucleus and thereby restricts transcription of YAP1 target genes. Interacts with SMAD1. Interacts with AMOTL2, the interaction is required for ubiquitination of AMOTL2 and localization of YAP1 to tight junctions. Interacts with AMOT isoform 1; the interaction facilitates translocation of YAP1 to the cytoplasm and tight junctions. In terms of assembly, interacts (via WW domain 1) with isoform 3 of ERBB4 (via PPxY motif 2). In terms of processing, phosphorylated by LATS1 and LATS2; leading to cytoplasmic translocation and inactivation. Phosphorylated by ABL1; leading to YAP1 stabilization, enhanced interaction with TP73 and recruitment onto proapoptotic genes; in response to DNA damage. Phosphorylation at Ser-400 and Ser-403 by CK1 is triggered by previous phosphorylation at Ser-397 by LATS proteins and leads to YAP1 ubiquitination by SCF(beta-TRCP) E3 ubiquitin ligase and subsequent degradation. Phosphorylated at Thr-119, Ser-138, Thr-154, Ser-367 and Thr-412 by MAPK8/JNK1 and MAPK9/JNK2, which is required for the regulation of apoptosis by YAP1. Phosphorylated in the nucleus by PRP4K; phosphorylation leads to nuclear exclusion. Post-translationally, lactylation by AARS1 promotes nuclear localization and stabilization of YAP1, leading to increased Hippo signaling pathway. Delactylated by SIRT1. Ubiquitinated by SCF(beta-TRCP) E3 ubiquitin ligase. As to expression, increased expression seen in some liver and prostate cancers. Isoforms lacking the transactivation domain found in striatal neurons of patients with Huntington disease (at protein level).

It localises to the cytoplasm. Its subcellular location is the nucleus. The protein resides in the cell junction. The protein localises to the tight junction. It is found in the cell membrane. Functionally, transcriptional regulator with dual roles as a coactivator and corepressor. Critical downstream regulatory target in the Hippo signaling pathway, crucial for organ size control and tumor suppression by restricting proliferation and promoting apoptosis. The Hippo signaling pathway core involves a kinase cascade featuring STK3/MST2 and STK4/MST1, along with its regulatory partner SAV1, which phosphorylates and activates LATS1/2 in complex with their regulatory protein, MOB1. This activation leads to the phosphorylation and inactivation of the YAP1 oncoprotein and WWTR1/TAZ. Phosphorylation of YAP1 by LATS1/2 prevents its nuclear translocation, thereby regulating the expression of its target genes. The transcriptional regulation of gene expression requires TEAD transcription factors and modulates cell growth, anchorage-independent growth, and induction of epithelial-mesenchymal transition (EMT). Plays a key role in tissue tension and 3D tissue shape by regulating the cortical actomyosin network, acting via ARHGAP18, a Rho GTPase activating protein that suppresses F-actin polymerization. It also suppresses ciliogenesis by acting as a transcriptional corepressor of TEAD4 target genes AURKA and PLK1. In conjunction with WWTR1, regulates TGFB1-dependent SMAD2 and SMAD3 nuclear accumulation. Synergizes with WBP2 to enhance PGR activity. Its function is as follows. Activates the C-terminal fragment (CTF) of ERBB4 (isoform 3). This Homo sapiens (Human) protein is Transcriptional coactivator YAP1.